An 874-amino-acid polypeptide reads, in one-letter code: Coatomer subunit gamma-1 (874 aa).

Basic and acidic residues predominate over residues 1–11; the sequence is MLKKFDKKDEE. Residues 1-21 form a disordered region; it reads MLKKFDKKDEESGGGSNPLQH. 4 HEAT repeats span residues 64–101, 283–320, 322–355, and 356–392; these read TEATEAFFAMTKLFQSNDPTLRRMCYLTIKEMSCIAED, KELAPAVSVLQLFCSSPKAALRYAAVRTLNKVAMKHPS, VTACNLDLENLVTDSNRSIATLAITTLLKTGSES, and SIDRLMKQISSFMSEISDEFKVVVVQAISALCQKYPR. Threonine 594 carries the phosphothreonine modification. The tract at residues 609–874 is interaction with ZNF289/ARFGAP2; sequence RQEIFQEQLA…PVDIILASVG (266 aa).

The protein belongs to the COPG family. In terms of assembly, oligomeric complex that consists of at least the alpha, beta, beta', gamma, delta, epsilon and zeta subunits. Interacts with ZNF289/ARFGAP2 through its C-terminal appendage domain. Interacts with EGFR upon EGF treatment; interaction is essential for regulation of EGF-dependent nuclear transport of EGFR by retrograde trafficking from the Golgi to the ER. The coatomer interacts with KDEL receptors; the interaction is important for retrograde trafficking of KDEL-bearing proteins from the Golgi to the endoplasmic reticulum. Interacts with COPB1. Interacts with TMED10 (via C-terminus). Interacts with TMED2, TMED3, TMED7 and TMED9.

The protein localises to the cytoplasm. It localises to the cytosol. The protein resides in the golgi apparatus membrane. Its subcellular location is the cytoplasmic vesicle. It is found in the COPI-coated vesicle membrane. Functionally, the coatomer is a cytosolic protein complex that binds to dilysine motifs and reversibly associates with Golgi non-clathrin-coated vesicles, which further mediate biosynthetic protein transport from the ER, via the Golgi up to the trans Golgi network. Coatomer complex is required for budding from Golgi membranes, and is essential for the retrograde Golgi-to-ER transport of dilysine-tagged proteins. In mammals, the coatomer can only be recruited by membranes associated to ADP-ribosylation factors (ARFs), which are small GTP-binding proteins; the complex also influences the Golgi structural integrity, as well as the processing, activity, and endocytic recycling of LDL receptors. Required for limiting lipid storage in lipid droplets. Involved in lipid homeostasis by regulating the presence of perilipin family members PLIN2 and PLIN3 at the lipid droplet surface and promoting the association of adipocyte triglyceride lipase (PNPLA2) with the lipid droplet surface to mediate lipolysis. This chain is Coatomer subunit gamma-1 (Copg1), found in Rattus norvegicus (Rat).